A 551-amino-acid polypeptide reads, in one-letter code: ETS domain-containing transcription factor ERF (551 aa).

A phosphothreonine mark is found at threonine 3 and threonine 7. Serine 20 and serine 24 each carry phosphoserine. Residues 27-107 (IQLWHFILEL…KGKRFTYKFN (81 aa)) constitute a DNA-binding region (ETS). 2 disordered regions span residues 130 to 169 (QSAP…SSSS) and 184 to 304 (GSVS…SHFS). Serine 185 and serine 190 each carry phosphoserine. Residues 239–250 (RGGPEPLSPFPV) show a composition bias toward pro residues. Positions 251–268 (SPLAGPGSLLPPQLSPAL) are enriched in low complexity. Residues 289–301 (SGGGGPSGSGGGS) are compositionally biased toward gly residues. The residue at position 327 (serine 327) is a Phosphoserine. Positions 342–476 (PQRPDKCPLP…KPEPGEAPGV (135 aa)) are disordered. The segment covering 348–361 (CPLPPMAPETPPVP) has biased composition (pro residues). A compositionally biased stretch (low complexity) spans 362–373 (SSASSSSSSSSS). Positions 404-413 (GGSGSGGLAE) are enriched in gly residues. 2 positions are modified to phosphoserine: serine 433 and serine 437. Residues 433 to 453 (SEGESEEVEVTDISDEDEEDG) are compositionally biased toward acidic residues. A Phosphothreonine modification is found at threonine 443. Residue serine 446 is modified to Phosphoserine. Glycyl lysine isopeptide (Lys-Gly) (interchain with G-Cter in SUMO2) cross-links involve residues lysine 467, lysine 483, and lysine 514. The interval 495–551 (RLEGGGCLSGGPEDEGEDKKVRGDVGPGESGGPLTPRRVSSDLQHATAQLSLEHRDS) is disordered. Threonine 529 carries the post-translational modification Phosphothreonine; by MAPK1. 3 positions are modified to phosphoserine: serine 534, serine 535, and serine 551. Polar residues predominate over residues 535–544 (SDLQHATAQL).

The protein belongs to the ETS family. Phosphorylated by multiple kinases including MAPK1/ERK2 at THR-529. Phosphorylation regulates the activity of ERF. Expressed along the osteogenic margins of the developing calvarial bones, in a similar distribution to that observed for the master osteogenic regulator RUNX2.

Its subcellular location is the nucleus. In terms of biological role, potent transcriptional repressor that binds to the H1 element of the Ets2 promoter. May regulate other genes involved in cellular proliferation. Required for extraembryonic ectoderm differentiation, ectoplacental cone cavity closure, and chorioallantoic attachment. May be important for regulating trophoblast stem cell differentiation. The chain is ETS domain-containing transcription factor ERF (Erf) from Mus musculus (Mouse).